We begin with the raw amino-acid sequence, 343 residues long: Ribosomal RNA small subunit methyltransferase C (343 aa).

It belongs to the methyltransferase superfamily. RsmC family. Monomer.

Its subcellular location is the cytoplasm. It carries out the reaction guanosine(1207) in 16S rRNA + S-adenosyl-L-methionine = N(2)-methylguanosine(1207) in 16S rRNA + S-adenosyl-L-homocysteine + H(+). Its function is as follows. Specifically methylates the guanine in position 1207 of 16S rRNA in the 30S particle. The chain is Ribosomal RNA small subunit methyltransferase C from Escherichia coli O17:K52:H18 (strain UMN026 / ExPEC).